The following is a 590-amino-acid chain: Arginine--tRNA ligase (590 aa).

The 'HIGH' region motif lies at 130 to 140; the sequence is PNIAKEMHVGH.

It belongs to the class-I aminoacyl-tRNA synthetase family. In terms of assembly, monomer.

The protein localises to the cytoplasm. The enzyme catalyses tRNA(Arg) + L-arginine + ATP = L-arginyl-tRNA(Arg) + AMP + diphosphate. This is Arginine--tRNA ligase from Synechococcus sp. (strain CC9311).